A 352-amino-acid chain; its full sequence is Molybdenum import ATP-binding protein ModC (352 aa).

In terms of domain architecture, ABC transporter spans 1–229 (MLELNFSQTL…SVMNPWLPKE (229 aa)). 31 to 38 (GVSGAGKT) contacts ATP. Residues 289–352 (QTSIRNVLRA…AQIKSVSITA (64 aa)) enclose the Mop domain.

It belongs to the ABC transporter superfamily. Molybdate importer (TC 3.A.1.8) family. As to quaternary structure, the complex is composed of two ATP-binding proteins (ModC), two transmembrane proteins (ModB) and a solute-binding protein (ModA).

The protein resides in the cell inner membrane. It carries out the reaction molybdate(out) + ATP + H2O = molybdate(in) + ADP + phosphate + H(+). Part of the ABC transporter complex ModABC involved in molybdenum import. Responsible for energy coupling to the transport system. In Shigella boydii serotype 4 (strain Sb227), this protein is Molybdenum import ATP-binding protein ModC.